We begin with the raw amino-acid sequence, 389 residues long: ATP phosphoribosyltransferase regulatory subunit (389 aa).

The protein belongs to the class-II aminoacyl-tRNA synthetase family. HisZ subfamily. In terms of assembly, heteromultimer composed of HisG and HisZ subunits.

It is found in the cytoplasm. The protein operates within amino-acid biosynthesis; L-histidine biosynthesis; L-histidine from 5-phospho-alpha-D-ribose 1-diphosphate: step 1/9. Required for the first step of histidine biosynthesis. May allow the feedback regulation of ATP phosphoribosyltransferase activity by histidine. The chain is ATP phosphoribosyltransferase regulatory subunit from Hydrogenovibrio crunogenus (strain DSM 25203 / XCL-2) (Thiomicrospira crunogena).